Here is a 67-residue protein sequence, read N- to C-terminus: Ubiquinol-cytochrome c reductase complex assembly factor 6 (67 aa).

The Mitochondrial matrix segment spans residues 1–8; it reads MPGGVPWS. The chain crosses the membrane as a helical; Signal-anchor for type II membrane protein span at residues 9 to 25; sequence AYLKMLSSSLLAMCAGA. Residues 26–67 lie on the Mitochondrial intermembrane side of the membrane; sequence QVVHWYYRPDLTIPEIPPKPGELKTELLGLKERRHEPHVSQQ.

It belongs to the UQCC6 family. In terms of assembly, interacts with UQCRC1. Interacts with UQCRQ. Interacts with UQCC5. Forms a complex, named COMB/coordinator of mitochondrial CYTB biogenesis, composed of UQCC1, UQCC2, UQCC4, UQCC5 and UQCC6; stabilizes nascent cytochrome b/MT-CYB and promotes its membrane insertion. Forms a complex, named COMA, composed of UQCC1, UQCC2 and UQCC4; activates MT-CYB translation. Forms a complex, named COMC, composed of UQCC1, UQCC2; UQCC3 and UQCC4; mediates MT-CYB hemylation and association with the first nuclear-encoded complex III subunit UQCRQ. Interacts with MT-CYB. In terms of tissue distribution, highly expressed in brown adipose, cardiac and skeletal muscle (at protein level).

Its subcellular location is the mitochondrion inner membrane. In terms of biological role, required for the assembly and stability of the mitochondrial ubiquinol-cytochrome c reductase complex (complex III or cytochrome b-c1 complex), a multisubunit transmembrane complex that is part of the mitochondrial electron transport chain (ETC) which drives oxidative phosphorylation. Mediates early complex III biogenesis. Participates in regulating the levels of electron transport chain proteins, and therefore energy supply, in response to changes in energy demand. Also required for cytochrome c oxidase complex (complex IV) assembly. The protein is Ubiquinol-cytochrome c reductase complex assembly factor 6 of Mus musculus (Mouse).